The sequence spans 507 residues: Pyridoxine 4-oxidase (507 aa).

His448 functions as the Proton acceptor in the catalytic mechanism.

This sequence belongs to the GMC oxidoreductase family. As to quaternary structure, monomer. It depends on FAD as a cofactor.

It catalyses the reaction pyridoxine + O2 = pyridoxal + H2O2. The protein operates within cofactor degradation; B6 vitamer degradation; pyridoxal from pyridoxine (oxidase route): step 1/1. This Microbacterium luteolum (Aureobacterium luteolum) protein is Pyridoxine 4-oxidase (pno).